A 271-amino-acid polypeptide reads, in one-letter code: Ribosomal RNA small subunit methyltransferase A (271 aa).

Residues Asn19, Leu21, Gly46, Glu67, Asp92, and Asn114 each contribute to the S-adenosyl-L-methionine site.

It belongs to the class I-like SAM-binding methyltransferase superfamily. rRNA adenine N(6)-methyltransferase family. RsmA subfamily.

The protein localises to the cytoplasm. It catalyses the reaction adenosine(1518)/adenosine(1519) in 16S rRNA + 4 S-adenosyl-L-methionine = N(6)-dimethyladenosine(1518)/N(6)-dimethyladenosine(1519) in 16S rRNA + 4 S-adenosyl-L-homocysteine + 4 H(+). In terms of biological role, specifically dimethylates two adjacent adenosines (A1518 and A1519) in the loop of a conserved hairpin near the 3'-end of 16S rRNA in the 30S particle. May play a critical role in biogenesis of 30S subunits. The sequence is that of Ribosomal RNA small subunit methyltransferase A from Aeromonas hydrophila subsp. hydrophila (strain ATCC 7966 / DSM 30187 / BCRC 13018 / CCUG 14551 / JCM 1027 / KCTC 2358 / NCIMB 9240 / NCTC 8049).